A 594-amino-acid polypeptide reads, in one-letter code: Suppressor of hairless protein (594 aa).

A disordered region spans residues 20 to 87 (ETTVVNPNGS…QQQQQHQQQM (68 aa)). The segment covering 58–87 (QQQQQQLQVHHQQQQQQQQQQQQQQHQQQM) has biased composition (low complexity). 3 DNA-binding regions span residues 131–141 (QKSYGNEKRFF), 239–244 (SKPSKK), and 266–271 (RLRSQT). The 91-residue stretch at 429 to 519 (PIVNSLNLNG…YATGLTFTYT (91 aa)) folds into the IPT/TIG domain. Composition is skewed to low complexity over residues 542-562 (NNNN…AGSP) and 569-580 (QQQQQQHQALPS). The segment at 542 to 594 (NNNNNITSISNNNNSNNAGSPAAGGGLQQQQQQHQALPSISEVQWNSHGSGLS) is disordered. The span at 582-594 (SEVQWNSHGSGLS) shows a compositional bias: polar residues.

The protein belongs to the Su(H) family. As to quaternary structure, interacts with activated cleaved Notch. Interacts with Hairless, this interaction preventing its DNA-binding activity. Interacts with insv (via BEN domain).

It localises to the nucleus. The protein resides in the cytoplasm. Its function is as follows. Transcriptional regulator that plays a central role in Notch signaling, a signaling pathway involved in cell-cell communication that regulates a broad spectrum of cell-fate determinations. Binds directly the 5'-GTGRGAR-3' DNA consensus sequence, which is present in the regulatory region of several genes. Acts as a transcriptional repressor when it is not associated with Notch proteins. When associated with some Notch protein, it acts as a transcriptional activator that activates transcription of Notch target genes. Required for transcription of Sim. Specifically binds to the immunoglobulin kappa-type J segment recombination signal sequence. Required for neurogenesis in imaginal disks. In the larval brain, might play a role as a transducer of Notch signaling during type II neuroblast development. Also functions independently of the Notch pathway, in the development of the bristle sensory organ precursor cell. In Drosophila melanogaster (Fruit fly), this protein is Suppressor of hairless protein (Su(H)).